Reading from the N-terminus, the 22-residue chain is Ocellatin-LB1 (22 aa).

Methionine amide is present on Met22.

As to expression, expressed by the skin glands.

It localises to the secreted. Functionally, antibacterial peptide that inhibits Gram-negative bacteria A.actinomycetemcomitans ATCC 29522 (MIC=222.37 uM) and E.coli ATCC 25922 (MIC=114.04 uM). Also has antifungal activity against C.albicans ATCC 18804 (MIC=233.55 uM) and C.lusitaniae ATCC 56936 (MIC=233.55 uM). No activity against the Gram-positive bacterium S.aureus ATCC 25923. Shows virtually no hemolytic activity towards rabbit erythrocytes. This chain is Ocellatin-LB1, found in Leptodactylus labyrinthicus (Labyrinth frog).